We begin with the raw amino-acid sequence, 528 residues long: Phosphoenolpyruvate carboxykinase (ATP) (528 aa).

Positions 56, 192, and 198 each coordinate substrate. Residues lysine 198, histidine 217, and glycine 233–threonine 241 each bind ATP. Residues lysine 198 and histidine 217 each coordinate Mn(2+). Residue aspartate 254 coordinates Mn(2+). Glutamate 282, arginine 319, and threonine 444 together coordinate ATP. Arginine 319 is a substrate binding site.

The protein belongs to the phosphoenolpyruvate carboxykinase (ATP) family. It depends on Mn(2+) as a cofactor.

It is found in the cytoplasm. It carries out the reaction oxaloacetate + ATP = phosphoenolpyruvate + ADP + CO2. Its pathway is carbohydrate biosynthesis; gluconeogenesis. Its function is as follows. Involved in the gluconeogenesis. Catalyzes the conversion of oxaloacetate (OAA) to phosphoenolpyruvate (PEP) through direct phosphoryl transfer between the nucleoside triphosphate and OAA. In Geobacillus thermodenitrificans (strain NG80-2), this protein is Phosphoenolpyruvate carboxykinase (ATP).